A 274-amino-acid chain; its full sequence is 2,3,4,5-tetrahydropyridine-2,6-dicarboxylate N-succinyltransferase (274 aa).

It belongs to the transferase hexapeptide repeat family.

The protein localises to the cytoplasm. It catalyses the reaction (S)-2,3,4,5-tetrahydrodipicolinate + succinyl-CoA + H2O = (S)-2-succinylamino-6-oxoheptanedioate + CoA. Its pathway is amino-acid biosynthesis; L-lysine biosynthesis via DAP pathway; LL-2,6-diaminopimelate from (S)-tetrahydrodipicolinate (succinylase route): step 1/3. The protein is 2,3,4,5-tetrahydropyridine-2,6-dicarboxylate N-succinyltransferase of Proteus mirabilis (strain HI4320).